Consider the following 401-residue polypeptide: Type 3 secretion system translocon protein SctE (401 aa).

Residues 129 to 160 are a coiled coil; that stretch reads IQRLHEQNMKKIEENQEKIKETEENAKQVKKS. 2 consecutive transmembrane segments (helical) span residues 166-186 and 225-245; these read IFGW…VASG and LGPI…VMTF. Positions 345 to 379 form a coiled coil; that stretch reads LALNKADMAALQSIIDRLKEELSHLSESHRQVMEL.

The protein belongs to the SctE/SipB/YopB family. The core secretion machinery of the T3SS is composed of approximately 20 different proteins, including cytoplasmic components, a base, an export apparatus and a needle. This subunit is involved in the formation of a pore, called the translocon, in host membrane. Interacts with YopD/SctB. Together with YopD/SctB, forms a multimeric integral membrane complex with a mass of between 500 and 700 kDa.

It localises to the secreted. Its subcellular location is the host membrane. In terms of biological role, component of the type III secretion system (T3SS), also called injectisome, which is used to inject bacterial effector proteins into eukaryotic host cells. YopB/SctE and YopD/SctB are inserted into the host membrane where they form a pore and allow the translocation of effector proteins into the cytosol of target cells. Is an essential virulence determinant. Required for YopE translocation. Its function is as follows. Essential for the establishment of Yersinia infections in a mouse model system, but not for the targeting of effector Yops. May modulate the host's immune response at a distance from the site of infection. The chain is Type 3 secretion system translocon protein SctE from Yersinia enterocolitica.